Reading from the N-terminus, the 692-residue chain is MAREFSLAKTRNIGIMAHVDAGKTTTTERILYYTGKIHKIGETHEGASQMDWMEQEQERGITITSAATTAQWDGHRVNIIDTPGHVDFTIEVQRSLRVLDGAVTVLDSQSGVEPQTETVWRQATEYGVPRIVFANKMDKIGADFLYSVQTLHDRLQANAHPIQLPIGSEDDFRGIIDLIKMKAEIYTNDLGTDILEEDIPEEYLEQAQEYREKLIEAVAETDEDLMMKYLEGEEITNEELVAGIRKATINVEFFPVLCGSAFKNKGVQLMLDAVIAYLPSPLDIPAIKGVNPDTDAEEERPASDEEPFAALAFKIMTDPFVGRLTFFRVYSGVLNSGSYVMNTSKGKRERIGRILQMHANSRQEIETVYAGDIAAAVGLKDTTTGDSLTDEKAKIILESIEVPEPVIQLMVEPKSKADQDKMGIALQKLAEEDPTFRVETNVETGETVIAGMGELHLDVLVDRMRREFKVEANVGAPQVSYRETFRASTQARGFFKRQSGGKGQFGDVWIEFTPNEEGKGFEFENAIVGGVVPREFIPAVEKGLIESMANGVLAGYPMVDVKAKLYDGSYHDVDSSETAFKIAASLALKEAAKTAQPAILEPMMLVTITAPEDNLGDVMGHVTARRGRVDGMEAHGTSQIVRAYVPLAEMFGYATVLRSATQGRGTFMMVFDHYEDVPKSVQEEIIKKNKGE.

The tr-type G domain maps to 8 to 282 (AKTRNIGIMA…AVIAYLPSPL (275 aa)). GTP is bound by residues 17–24 (AHVDAGKT), 81–85 (DTPGH), and 135–138 (NKMD).

This sequence belongs to the TRAFAC class translation factor GTPase superfamily. Classic translation factor GTPase family. EF-G/EF-2 subfamily.

It localises to the cytoplasm. In terms of biological role, catalyzes the GTP-dependent ribosomal translocation step during translation elongation. During this step, the ribosome changes from the pre-translocational (PRE) to the post-translocational (POST) state as the newly formed A-site-bound peptidyl-tRNA and P-site-bound deacylated tRNA move to the P and E sites, respectively. Catalyzes the coordinated movement of the two tRNA molecules, the mRNA and conformational changes in the ribosome. The sequence is that of Elongation factor G from Streptococcus equi subsp. equi (strain 4047).